The sequence spans 299 residues: Taste receptor type 2 member 5 (299 aa).

Met1 is a topological domain (extracellular). A helical transmembrane segment spans residues 2–22; sequence LSAGLGLLMLVAVVEFLIGLI. The Cytoplasmic portion of the chain corresponds to 23–45; it reads GNGVLVVWSFREWMRKFNWSSYN. A helical membrane pass occupies residues 46 to 66; sequence LIILGLAGCRFLLQWLIILDL. At 67–82 the chain is on the extracellular side; that stretch reads SLFPLFQSSRWLRYLS. Residues 83–103 traverse the membrane as a helical segment; the sequence is IFWVLVSQASLWFATFLSVFY. Residues 104 to 127 lie on the Cytoplasmic side of the membrane; it reads CKKITTFDRPAYLWLKQRAYNLSL. The chain crosses the membrane as a helical span at residues 128 to 148; it reads WCLLGYFIINLLLTVQIGLMF. Residues 149-175 lie on the Extracellular side of the membrane; sequence YHPPQGNSSIRYPFESWQYLYAFRLNS. N-linked (GlcNAc...) asparagine glycosylation is present at Asn155. The chain crosses the membrane as a helical span at residues 176–196; sequence GSYLPLMVFLVSSGMLIVSLY. Topologically, residues 197–223 are cytoplasmic; the sequence is THHKKMKVHSAGRRDVRAKAHITALKS. A helical transmembrane segment spans residues 224-244; sequence LGCFLFLHLVYIMASPFSITS. The Extracellular segment spans residues 245–253; the sequence is KTYPPDLTS. A helical transmembrane segment spans residues 254-274; it reads VFIWETLMAAYPSLHSLILIM. Topologically, residues 275–299 are cytoplasmic; the sequence is GIPRVKQTCQKILWKTVCARRCWGP.

This sequence belongs to the G-protein coupled receptor T2R family.

The protein localises to the membrane. Its function is as follows. Receptor that may play a role in the perception of bitterness and is gustducin-linked. May play a role in sensing the chemical composition of the gastrointestinal content. The activity of this receptor may stimulate alpha gustducin, mediate PLC-beta-2 activation and lead to the gating of TRPM5. In Gorilla gorilla gorilla (Western lowland gorilla), this protein is Taste receptor type 2 member 5 (TAS2R5).